Here is a 173-residue protein sequence, read N- to C-terminus: Pyridoxal 5'-phosphate synthase subunit PdxT (173 aa).

Position 49–51 (49–51 (GES)) interacts with L-glutamine. Cysteine 81 serves as the catalytic Nucleophile. L-glutamine contacts are provided by residues arginine 113 and 141–142 (IR).

It belongs to the glutaminase PdxT/SNO family. In the presence of PdxS, forms a dodecamer of heterodimers. Only shows activity in the heterodimer.

The catalysed reaction is aldehydo-D-ribose 5-phosphate + D-glyceraldehyde 3-phosphate + L-glutamine = pyridoxal 5'-phosphate + L-glutamate + phosphate + 3 H2O + H(+). It catalyses the reaction L-glutamine + H2O = L-glutamate + NH4(+). It functions in the pathway cofactor biosynthesis; pyridoxal 5'-phosphate biosynthesis. Its function is as follows. Catalyzes the hydrolysis of glutamine to glutamate and ammonia as part of the biosynthesis of pyridoxal 5'-phosphate. The resulting ammonia molecule is channeled to the active site of PdxS. The protein is Pyridoxal 5'-phosphate synthase subunit PdxT of Mycolicibacterium paratuberculosis (strain ATCC BAA-968 / K-10) (Mycobacterium paratuberculosis).